A 443-amino-acid polypeptide reads, in one-letter code: Phosphoglucosamine mutase (443 aa).

The active-site Phosphoserine intermediate is the serine 101. Positions 101, 239, 241, and 243 each coordinate Mg(2+). Serine 101 carries the post-translational modification Phosphoserine.

It belongs to the phosphohexose mutase family. Mg(2+) is required as a cofactor. Activated by phosphorylation.

It carries out the reaction alpha-D-glucosamine 1-phosphate = D-glucosamine 6-phosphate. In terms of biological role, catalyzes the conversion of glucosamine-6-phosphate to glucosamine-1-phosphate. This chain is Phosphoglucosamine mutase, found in Francisella tularensis subsp. tularensis (strain FSC 198).